The sequence spans 102 residues: A-type ATP synthase subunit F (102 aa).

This sequence belongs to the V-ATPase F subunit family. In terms of assembly, has multiple subunits with at least A(3), B(3), C, D, E, F, H, I and proteolipid K(x).

Its subcellular location is the cell membrane. Component of the A-type ATP synthase that produces ATP from ADP in the presence of a proton gradient across the membrane. In Thermococcus gammatolerans (strain DSM 15229 / JCM 11827 / EJ3), this protein is A-type ATP synthase subunit F.